The sequence spans 569 residues: Santalene synthase (569 aa).

Residues arginine 284, aspartate 321, aspartate 325, and arginine 460 each coordinate (2E)-geranyl diphosphate. Mg(2+)-binding residues include aspartate 321 and aspartate 325. The short motif at 321-325 (DDAYD) is the DDXXD motif element. Residues asparagine 463, threonine 467, and glutamate 471 each contribute to the Mg(2+) site.

This sequence belongs to the terpene synthase family. Tpsb subfamily. It depends on Mg(2+) as a cofactor. Mn(2+) serves as cofactor.

It catalyses the reaction (2E,6E)-farnesyl diphosphate = (1S,5S,6R)-alpha-bergamotene + diphosphate. It carries out the reaction (2E,6E)-farnesyl diphosphate = (+)-alpha-santalene + diphosphate. The enzyme catalyses (2E,6E)-farnesyl diphosphate = (-)-beta-santalene + diphosphate. In terms of biological role, catalyzes a mixture of sesquiterpenoids from (2E,6E)-farnesyl diphosphate in fragrance biosynthesis. Catalyzes the formation of alpha-santalene, beta-santalene, epi-beta-santalene and exo-alpha-bergamotene, as well as traces of alpha-farnesene and beta-farnesene. The protein is Santalene synthase of Santalum austrocaledonicum (Sandalwood).